The primary structure comprises 158 residues: Dysbindin domain-containing protein 1 (158 aa).

The tract at residues 1-38 (MEPSEGASPGGLVKEVDMPQAALSAPVPVTGTSGQSPM) is disordered. Phosphoserine occurs at positions 95 and 119. Residues 96-158 (DDENVASDSH…ILTVERPKED (63 aa)) form a disordered region. Residues 125–141 (TRAEQNREKQPFGDPER) are compositionally biased toward basic and acidic residues.

Belongs to the dysbindin family.

In Bos taurus (Bovine), this protein is Dysbindin domain-containing protein 1 (DBNDD1).